Consider the following 331-residue polypeptide: Ornithine carbamoyltransferase (331 aa).

Carbamoyl phosphate-binding positions include 55–58 (STRT), Gln-82, Arg-106, and 133–136 (HPTQ). L-ornithine-binding positions include Asn-166, Asp-230, and 234-235 (SM). Carbamoyl phosphate contacts are provided by residues 272 to 273 (CL) and Arg-317.

It belongs to the aspartate/ornithine carbamoyltransferase superfamily. OTCase family.

It localises to the cytoplasm. It carries out the reaction carbamoyl phosphate + L-ornithine = L-citrulline + phosphate + H(+). Its pathway is amino-acid biosynthesis; L-arginine biosynthesis; L-arginine from L-ornithine and carbamoyl phosphate: step 1/3. Reversibly catalyzes the transfer of the carbamoyl group from carbamoyl phosphate (CP) to the N(epsilon) atom of ornithine (ORN) to produce L-citrulline. The polypeptide is Ornithine carbamoyltransferase (Neisseria meningitidis serogroup C / serotype 2a (strain ATCC 700532 / DSM 15464 / FAM18)).